The following is a 172-amino-acid chain: R-phycocyanin beta subunit (172 aa).

Asn72 is subject to N4-methylasparagine. Residue Cys82 coordinates (2R,3E)-phycocyanobilin. Cys153 contacts (2R,3E)-phycoerythrobilin.

Belongs to the phycobiliprotein family. In terms of assembly, heterodimer of an alpha and a beta subunit, which further assembles into trimers and the trimers into hexamers. Post-translationally, contains two covalently linked bilin chromophores.

Its subcellular location is the cellular thylakoid membrane. Its function is as follows. Light-harvesting photosynthetic bile pigment-protein from the phycobiliprotein complex (phycobilisome, PBS). Phycocyanin is the major phycobiliprotein in the PBS rod. The protein is R-phycocyanin beta subunit (rpcB) of Synechococcus sp. (strain WH7803).